A 349-amino-acid polypeptide reads, in one-letter code: Polyamine aminopropyltransferase 2 (349 aa).

The PABS domain maps to 29-267 (DGAITAIEDS…SSWGFLLASD (239 aa)). Gln60 lines the S-methyl-5'-thioadenosine pocket. Spermidine-binding residues include His91 and Glu115. Residues Asp135 and 167 to 168 (DG) each bind S-methyl-5'-thioadenosine. The active-site Proton acceptor is Asp185. Residue Pro194 coordinates S-methyl-5'-thioadenosine.

It belongs to the spermidine/spermine synthase family. In terms of assembly, homodimer or homotetramer.

It localises to the cytoplasm. The catalysed reaction is S-adenosyl 3-(methylsulfanyl)propylamine + putrescine = S-methyl-5'-thioadenosine + spermidine + H(+). Its pathway is amine and polyamine biosynthesis; spermidine biosynthesis; spermidine from putrescine: step 1/1. Catalyzes the irreversible transfer of a propylamine group from the amino donor S-adenosylmethioninamine (decarboxy-AdoMet) to putrescine (1,4-diaminobutane) to yield spermidine. The chain is Polyamine aminopropyltransferase 2 from Pseudomonas aeruginosa (strain ATCC 15692 / DSM 22644 / CIP 104116 / JCM 14847 / LMG 12228 / 1C / PRS 101 / PAO1).